The primary structure comprises 141 residues: Endoribonuclease YbeY (141 aa).

Residues His-101, His-105, and His-111 each contribute to the Zn(2+) site.

Belongs to the endoribonuclease YbeY family. Zn(2+) serves as cofactor.

The protein resides in the cytoplasm. Single strand-specific metallo-endoribonuclease involved in late-stage 70S ribosome quality control and in maturation of the 3' terminus of the 16S rRNA. The sequence is that of Endoribonuclease YbeY from Nitrosomonas eutropha (strain DSM 101675 / C91 / Nm57).